A 56-amino-acid polypeptide reads, in one-letter code: uncharacterized protein (56 aa).

2 helical membrane-spanning segments follow: residues 5 to 23 (VLIF…YWIY) and 33 to 55 (ITAG…ILGW).

The protein localises to the cell membrane. This is an uncharacterized protein from Archaeoglobus fulgidus (strain ATCC 49558 / DSM 4304 / JCM 9628 / NBRC 100126 / VC-16).